Here is a 344-residue protein sequence, read N- to C-terminus: Methionine import ATP-binding protein MetN (344 aa).

The ABC transporter domain maps to 2 to 241 (IEIRNLSQRF…PHHEVTRALI (240 aa)). 38-45 (GRSGAGKS) serves as a coordination point for ATP.

The protein belongs to the ABC transporter superfamily. Methionine importer (TC 3.A.1.24) family. In terms of assembly, the complex is composed of two ATP-binding proteins (MetN), two transmembrane proteins (MetI) and a solute-binding protein (MetQ).

It is found in the cell inner membrane. The enzyme catalyses L-methionine(out) + ATP + H2O = L-methionine(in) + ADP + phosphate + H(+). The catalysed reaction is D-methionine(out) + ATP + H2O = D-methionine(in) + ADP + phosphate + H(+). Functionally, part of the ABC transporter complex MetNIQ involved in methionine import. Responsible for energy coupling to the transport system. In Burkholderia thailandensis (strain ATCC 700388 / DSM 13276 / CCUG 48851 / CIP 106301 / E264), this protein is Methionine import ATP-binding protein MetN.